The sequence spans 235 residues: Adenosine 5'-phosphosulfate reductase (235 aa).

Positions 121, 122, 204, and 207 each coordinate [4Fe-4S] cluster. Cys-230 (nucleophile; cysteine thiosulfonate intermediate) is an active-site residue.

It belongs to the PAPS reductase family. CysH subfamily. [4Fe-4S] cluster serves as cofactor.

The protein localises to the cytoplasm. The enzyme catalyses [thioredoxin]-disulfide + sulfite + AMP + 2 H(+) = adenosine 5'-phosphosulfate + [thioredoxin]-dithiol. The protein operates within sulfur metabolism; hydrogen sulfide biosynthesis; sulfite from sulfate. Catalyzes the formation of sulfite from adenosine 5'-phosphosulfate (APS) using thioredoxin as an electron donor. The protein is Adenosine 5'-phosphosulfate reductase of Anoxybacillus flavithermus (strain DSM 21510 / WK1).